Reading from the N-terminus, the 295-residue chain is Protein transport protein SSO2 (295 aa).

Over residues 1-18 the composition is skewed to low complexity; that stretch reads MSNPYQNSQNGYQQNNSY. A disordered region spans residues 1–31; the sequence is MSNPYQNSQNGYQQNNSYELNNYPNKQYSSS. The Cytoplasmic segment spans residues 1-270; it reads MSNPYQNSQN…SAKSARKKKL (270 aa). Residues 19-31 show a composition bias toward polar residues; it reads ELNNYPNKQYSSS. The stretch at 33-110 forms a coiled coil; the sequence is EDDFVQFMNE…NRIKNVQTQA (78 aa). The region spanning 196-258 is the t-SNARE coiled-coil homology domain; it reads LNEVQVRHRE…EQGVGHTNKA (63 aa). Residues 271 to 291 traverse the membrane as a helical; Anchor for type IV membrane protein segment; it reads WCFFICLLIVIILAVILGAYF. Residues 292–295 lie on the Extracellular side of the membrane; that stretch reads GTRK.

This sequence belongs to the syntaxin family.

The protein resides in the membrane. Its function is as follows. Late secretory t-SNARE protein required for secretion and proper cytokinesis. Plays an important role in the secretion of virulence-associated extracellular enzymes and vesicle-mediated polarized hyphal growth. The sequence is that of Protein transport protein SSO2 (SSO2) from Candida albicans (strain SC5314 / ATCC MYA-2876) (Yeast).